The sequence spans 607 residues: Glutamine--fructose-6-phosphate aminotransferase [isomerizing] (607 aa).

Residue cysteine 2 is the Nucleophile; for GATase activity of the active site. The Glutamine amidotransferase type-2 domain occupies 2 to 217; it reads CGIIGILGKR…DGDWAVLTRE (216 aa). 2 SIS domains span residues 277–422 and 455–597; these read TVRS…QRGF and ICRN…VDQP. The active-site For Fru-6P isomerization activity is the lysine 602.

Homodimer.

Its subcellular location is the cytoplasm. The enzyme catalyses D-fructose 6-phosphate + L-glutamine = D-glucosamine 6-phosphate + L-glutamate. Functionally, catalyzes the first step in hexosamine metabolism, converting fructose-6P into glucosamine-6P using glutamine as a nitrogen source. The polypeptide is Glutamine--fructose-6-phosphate aminotransferase [isomerizing] (Bartonella henselae (strain ATCC 49882 / DSM 28221 / CCUG 30454 / Houston 1) (Rochalimaea henselae)).